A 1111-amino-acid polypeptide reads, in one-letter code: Lysylphosphatidylglycerol biosynthesis bifunctional protein LysX (1111 aa).

The segment at 1–612 (MTLTSPPRTR…VLHHDGTAPD (612 aa)) is phosphatidylglycerol lysyltransferase. The next 7 helical transmembrane spans lie at 18 to 38 (VPAAAGWTVGVIATLSLIASV), 60 to 80 (FPDTSFAWAFVLALLAGALAA), 84 to 104 (IAWWILLLYMVAAVGWNVADL), 118 to 138 (VIGLAFHLAAVAFLLLARPLF), 152 to 172 (GVLAAGMAVGVLVGWGLLELF), 209 to 229 (VNALLGLFGALALMAAAIVLF), and 308 to 328 (AWLALCGTYGWAPGVMGASVG). Residues 613-1111 (MSGLRTDTAD…TLPFPLARPR (499 aa)) form a lysine--tRNA ligase region. The segment at residues 674–747 (VAGRVLRIRD…GTRSLLVRHW (74 aa)) is a DNA-binding region (OB). Residues aspartate 1023 and glutamate 1030 each coordinate Mg(2+).

In the N-terminal section; belongs to the LPG synthetase family. The protein in the C-terminal section; belongs to the class-II aminoacyl-tRNA synthetase family. Requires Mg(2+) as cofactor.

The protein resides in the cell membrane. The catalysed reaction is tRNA(Lys) + L-lysine + ATP = L-lysyl-tRNA(Lys) + AMP + diphosphate. The enzyme catalyses L-lysyl-tRNA(Lys) + a 1,2-diacyl-sn-glycero-3-phospho-(1'-sn-glycerol) = a 1,2-diacyl-sn-glycero-3-phospho-1'-(3'-O-L-lysyl)-sn-glycerol + tRNA(Lys). Its function is as follows. Catalyzes the production of L-lysyl-tRNA(Lys)transfer and the transfer of a lysyl group from L-lysyl-tRNA(Lys) to membrane-bound phosphatidylglycerol (PG), which produces lysylphosphatidylglycerol (LPG), one of the components of the bacterial membrane with a positive net charge. LPG synthesis contributes to the resistance to cationic antimicrobial peptides (CAMPs) and likely protects M.tuberculosis against the CAMPs produced by competiting microorganisms (bacteriocins). In fact, the modification of anionic phosphatidylglycerol with positively charged L-lysine results in repulsion of the peptides. The chain is Lysylphosphatidylglycerol biosynthesis bifunctional protein LysX (lysX) from Mycobacterium sp. (strain JLS).